A 132-amino-acid chain; its full sequence is Large ribosomal subunit protein uL24 (132 aa).

This sequence belongs to the universal ribosomal protein uL24 family. Part of the 50S ribosomal subunit.

One of two assembly initiator proteins, it binds directly to the 5'-end of the 23S rRNA, where it nucleates assembly of the 50S subunit. Functionally, one of the proteins that surrounds the polypeptide exit tunnel on the outside of the subunit. In Synechococcus sp. (strain JA-3-3Ab) (Cyanobacteria bacterium Yellowstone A-Prime), this protein is Large ribosomal subunit protein uL24.